We begin with the raw amino-acid sequence, 118 residues long: Small ribosomal subunit protein uS13 (118 aa).

The segment at 92 to 118 (RRGLPVRGQRTKTNARTRKGPRKPIKK) is disordered.

The protein belongs to the universal ribosomal protein uS13 family. Part of the 30S ribosomal subunit. Forms a loose heterodimer with protein S19. Forms two bridges to the 50S subunit in the 70S ribosome.

Located at the top of the head of the 30S subunit, it contacts several helices of the 16S rRNA. In the 70S ribosome it contacts the 23S rRNA (bridge B1a) and protein L5 of the 50S subunit (bridge B1b), connecting the 2 subunits; these bridges are implicated in subunit movement. Contacts the tRNAs in the A and P-sites. The polypeptide is Small ribosomal subunit protein uS13 (Yersinia pestis).